The primary structure comprises 334 residues: Ornithine carbamoyltransferase (334 aa).

Carbamoyl phosphate-binding positions include 56-59 (STRT), Q83, R107, and 134-137 (HPTQ). Residues N168, D232, and 236-237 (SM) each bind L-ornithine. Carbamoyl phosphate contacts are provided by residues 274 to 275 (CL) and R320.

This sequence belongs to the aspartate/ornithine carbamoyltransferase superfamily. OTCase family.

The protein localises to the cytoplasm. It catalyses the reaction carbamoyl phosphate + L-ornithine = L-citrulline + phosphate + H(+). The protein operates within amino-acid biosynthesis; L-arginine biosynthesis; L-arginine from L-ornithine and carbamoyl phosphate: step 1/3. Functionally, reversibly catalyzes the transfer of the carbamoyl group from carbamoyl phosphate (CP) to the N(epsilon) atom of ornithine (ORN) to produce L-citrulline. This Escherichia coli O157:H7 protein is Ornithine carbamoyltransferase.